The chain runs to 699 residues: MDGTPSSGPPRVEAPHLLAPLQTHSQLVALTPQFKSQQSQPQSQSQYPSLINPDSYSSSSPYRLDCGAGIGQGIEDGEDYDQEESNCVTNPEPQPEHQHQYLPQLLDLVADNLEQALIVPRIHQHPQSNNCNSPESFHMMNQSHHQQSEMYYPQYPTQQYNPYPYPTNGAHAPAVSTPMPGPQNVLPVPSALSNQGAMPQAAYSNNAPAGNFDTTGQHNPPGMKPRVTATLWEDEGSLCFQVEARGICVARREDNHMINGTKLLNVAGMTRGRRDGILKSEKVRHVVKIGPMHLKGVWIPYDRALDFANKEKITELLYPLFVHNIGALLYHPSNSNRTSQVMAAAERKKNEAIVGNRSLPSLVQSHHQMMPAMPTGYTSQQPLTNGHQSMANTPQPLTNGSQPPMNGSQTPMNGPQPPMQNGGSMLKRVREDDDDLHRSGPNGHDPMNNIHGMPNGYPHQSPLGSVHQPPMQNGNDGGLKRGREEHDDMHRAGPNGHDPMNNMPGGMPSLPNYAPPPLQNLHQPLSNGDSGMLKRGRDDDDDVHRSSPNGHDANGNFELKRRKTETSTSNDMLPQSPYYTLSNGAYQGPMMNSMNHYKRRDDEAETPRPGPNMNDLNNFDLKQRHKTMESSVPAPQYDAMNRPHSSIGNSPAYASAPTGYDHLTRPASTVAVSPSYPAGPGYELARPVTNVPRRQQSFG.

2 disordered regions span residues 1–20 (MDGT…LLAP) and 31–97 (TPQF…QPEH). Positions 32-49 (PQFKSQQSQPQSQSQYPS) are enriched in low complexity. Over residues 52 to 61 (NPDSYSSSSP) the composition is skewed to polar residues. Over residues 75-84 (EDGEDYDQEE) the composition is skewed to acidic residues. An HTH APSES-type domain is found at 226-332 (RVTATLWEDE…HNIGALLYHP (107 aa)). The segment at residues 260–281 (GTKLLNVAGMTRGRRDGILKSE) is a DNA-binding region (H-T-H motif). Disordered stretches follow at residues 372–594 (AMPT…MNSM), 599–618 (RRDD…DLNN), and 674–699 (PSYP…QSFG). Over residues 376–423 (GYTSQQPLTNGHQSMANTPQPLTNGSQPPMNGSQTPMNGPQPPMQNGG) the composition is skewed to polar residues. Composition is skewed to basic and acidic residues over residues 428 to 438 (RVREDDDDLHR) and 478 to 491 (GLKR…DMHR). The span at 520-529 (NLHQPLSNGD) shows a compositional bias: polar residues. The span at 535 to 545 (RGRDDDDDVHR) shows a compositional bias: basic and acidic residues. The span at 566–594 (TSTSNDMLPQSPYYTLSNGAYQGPMMNSM) shows a compositional bias: polar residues. Residues 669–695 (TVAVSPSYPAGPGYELARPVTNVPRRQ) form a nuclear localization domain region.

Belongs to the EFG1/PHD1/stuA family.

The protein localises to the nucleus. Its function is as follows. Transcription factor that regulates asexual reproduction. Binds the StuA-response elements (StRE) with the consensus sequence 5'-(A/T)CGCG(T/A)N(A/C)-3' at the promoters of target genes. Controls the expression of the gene clusters involved in the production of deoxynivalenol (DON) and 15-acetyldeoxynivalenol (15ADON). Regulates the expression of genes involved in chitin and glucan metabolism. Also controls catalase activity and cell surface hydrophobicity. Plays an important role in pathogenicity. In Gibberella zeae (strain ATCC MYA-4620 / CBS 123657 / FGSC 9075 / NRRL 31084 / PH-1) (Wheat head blight fungus), this protein is Cell pattern formation-associated protein StuA.